The chain runs to 412 residues: 1-deoxy-D-xylulose 5-phosphate reductoisomerase (412 aa).

NADPH contacts are provided by Thr-10, Gly-11, Ser-12, Ile-13, Gly-36, Lys-37, Asn-38, and Asn-130. 1-deoxy-D-xylulose 5-phosphate is bound at residue Lys-131. An NADPH-binding site is contributed by Glu-132. Asp-156 is a Mn(2+) binding site. 4 residues coordinate 1-deoxy-D-xylulose 5-phosphate: Ser-157, Glu-158, Ser-194, and His-217. Residue Glu-158 coordinates Mn(2+). Gly-223 lines the NADPH pocket. 4 residues coordinate 1-deoxy-D-xylulose 5-phosphate: Ser-230, Asn-235, Lys-236, and Glu-239. Glu-239 serves as a coordination point for Mn(2+).

This sequence belongs to the DXR family. Mg(2+) is required as a cofactor. Requires Mn(2+) as cofactor.

It catalyses the reaction 2-C-methyl-D-erythritol 4-phosphate + NADP(+) = 1-deoxy-D-xylulose 5-phosphate + NADPH + H(+). Its pathway is isoprenoid biosynthesis; isopentenyl diphosphate biosynthesis via DXP pathway; isopentenyl diphosphate from 1-deoxy-D-xylulose 5-phosphate: step 1/6. Its function is as follows. Catalyzes the NADPH-dependent rearrangement and reduction of 1-deoxy-D-xylulose-5-phosphate (DXP) to 2-C-methyl-D-erythritol 4-phosphate (MEP). In Prochlorococcus marinus (strain NATL2A), this protein is 1-deoxy-D-xylulose 5-phosphate reductoisomerase.